The following is a 652-amino-acid chain: Protein phosphatase Slingshot homolog 3 (652 aa).

Over residues 1–16 (MALVTVSRSPPASGHS) the composition is skewed to polar residues. The tract at residues 1–31 (MALVTVSRSPPASGHSTPVGPTDRVIRRRGR) is disordered. Ala2 is modified (N-acetylalanine). A phosphoserine mark is found at Ser9, Ser37, Ser85, and Ser87. The tract at residues 43–91 (GAVLGLQDGGEGNDAAEADPEPMEKPSGEEQPAEDQTDNGQGSQSPWKQ) is disordered. Over residues 80–90 (DNGQGSQSPWK) the composition is skewed to polar residues. A DEK-C domain is found at 266 to 321 (EQMEQAILAELWQVLDASDLDSVTSKEIRQALELRLGCPLQQYRDFIDNQMLLLMA). Positions 325 to 466 (RASRIFPHLY…LQTYQGILTA (142 aa)) constitute a Tyrosine-protein phosphatase domain. The Phosphocysteine intermediate role is filled by Cys410. Disordered stretches follow at residues 484-526 (EPLA…LGLR), 540-580 (LLEP…KGGQ), and 610-652 (RAFQ…EGKA). Over residues 540-552 (LLEPSSEPESTTE) the composition is skewed to low complexity. Residues 642-652 (SVDDSREEGKA) are compositionally biased toward basic and acidic residues.

The protein belongs to the protein-tyrosine phosphatase family. Does not bind to, or colocalize with, filamentous actin.

Its subcellular location is the cytoplasm. It is found in the cytoskeleton. The protein localises to the nucleus. The catalysed reaction is O-phospho-L-tyrosyl-[protein] + H2O = L-tyrosyl-[protein] + phosphate. It catalyses the reaction O-phospho-L-seryl-[protein] + H2O = L-seryl-[protein] + phosphate. It carries out the reaction O-phospho-L-threonyl-[protein] + H2O = L-threonyl-[protein] + phosphate. Functionally, protein phosphatase which may play a role in the regulation of actin filament dynamics. Can dephosphorylate and activate the actin binding/depolymerizing factor cofilin, which subsequently binds to actin filaments and stimulates their disassembly. This is Protein phosphatase Slingshot homolog 3 (Ssh3) from Rattus norvegicus (Rat).